The chain runs to 378 residues: Prolargin (378 aa).

The signal sequence occupies residues 1-21 (MRASFFWLLPLLLILASVAQG). Positions 22–62 (QPTRPKPGIRRKPKPRPTPRFPQAPEPAEPTDLPPPLPPGP) are disordered. Residues 28–38 (PGIRRKPKPRP) are compositionally biased toward basic residues. Residues 39-62 (TPRFPQAPEPAEPTDLPPPLPPGP) show a composition bias toward pro residues. 12 LRR repeats span residues 91–110 (RRVPVIPPRIHYLYLQNNFI), 111–134 (TELPLESFQNATGLRWVNLDNNRI), 135–158 (RKVDQRVLGKLPSLAFLYMEKNQL), 159–179 (EEVPSALPRNLEQLRLSQNLI), 180–203 (SRIPPGVFSKLENLLLLDLQHNRL), 204–229 (SDGVFKADTFQGLKNLMQLNLAHNIL), 230–250 (RKMPPKVPQAIHQLYLDSNKI), 251–274 (ETIPNGYFKDFPNLAFIRMNYNKL), 275–299 (SDRGLPKNSFNISNLLVLHLSHNKI), 300–319 (SNVPAISNKLEHLYLNNNSI), 320–358 (EKINGTQICPNNLVAFHDFSSDLENVPHLRYLRLDGNFL), and 359–378 (KPPIPLDLMMCFRLLQSVVI). N-linked (GlcNAc...) asparagine glycosylation is present at N120. Residues N285, N316, and N323 are each glycosylated (N-linked (GlcNAc...) asparagine). The cysteines at positions 328 and 369 are disulfide-linked.

The protein belongs to the small leucine-rich proteoglycan (SLRP) family. SLRP class II subfamily. Binds the basement membrane heparan sulfate proteoglycan perlecan and triple helical collagens type I and type II. Glycosylated; contains heparan sulfate. As to expression, expressed in cartilage throughout both fetal development and postnatal life. It is also expressed in the developing embryo prior to skeletogenesis. In adult, highest expression in lung, lower levels in cardiac and skeletal muscle.

The protein resides in the secreted. It is found in the extracellular space. The protein localises to the extracellular matrix. Its function is as follows. May anchor basement membranes to the underlying connective tissue. This chain is Prolargin (Prelp), found in Mus musculus (Mouse).